A 379-amino-acid chain; its full sequence is Caffeyl-CoA reductase-Etf complex subunit CarC (379 aa).

FAD-binding positions include 122 to 131 (FALTEPGAGS) and 155 to 157 (FIT). Serine 131 contributes to the substrate binding site. Residue 239 to 242 (DVGR) participates in substrate binding. Residues arginine 267, glutamine 278, and 335-339 (QIHGG) each bind FAD. Glutamate 362 functions as the Proton acceptor in the catalytic mechanism. Glycine 363 lines the substrate pocket. 364–366 (TSQ) is an FAD binding site.

Belongs to the acyl-CoA dehydrogenase family. Part of the homotrimeric caffeyl-CoA reductase-Etf complex composed of (R)-2-hydroxyisocaproyl-CoA dehydratase CarC, and the electron transfer flavoprotein (ETF) alpha (CarE) and beta (CarD) subunits. FAD serves as cofactor.

It localises to the cytoplasm. The enzyme catalyses hydrocaffeoyl-CoA + 2 reduced [2Fe-2S]-[ferredoxin] + 2 NAD(+) = (E)-caffeoyl-CoA + 2 oxidized [2Fe-2S]-[ferredoxin] + 2 NADH. The Caffeyl-CoA reductase-Etf complex catalyzes the reduction of caffeyl-CoA to yield hydrocaffeyl-CoA. It couples the endergonic ferredoxin reduction with NADH as reductant to the exergonic reduction of caffeoyl-CoA with the same reductant. It uses the mechanism of electron bifurcation to overcome the steep energy barrier in ferredoxin reduction. Also reduces 4-coumaroyl-CoA and feruloyl-CoA. This is Caffeyl-CoA reductase-Etf complex subunit CarC from Acetobacterium woodii (strain ATCC 29683 / DSM 1030 / JCM 2381 / KCTC 1655 / WB1).